The primary structure comprises 399 residues: 5'-C-glycyluridine monooxygenase-decarboxylase (399 aa).

Threonine 179 lines the phosphate pocket. An N6-(pyridoxal phosphate)lysine modification is found at lysine 230. Positions 318, 322, 353, and 367 each coordinate phosphate.

It belongs to the SelA family. As to quaternary structure, homooctamer; tetramer of homodimers. It depends on pyridoxal 5'-phosphate as a cofactor.

The catalysed reaction is (5'S,6'R)-C-glycyluridine + O2 = uridine-5'-carboxamide + CO2 + H2O. Its pathway is antibiotic biosynthesis. With respect to regulation, activity is dependent on phosphate. Its function is as follows. Monooxygenase-decarboxylase involved in the biosynthesis of the capuramycin-type nucleoside antibiotic A-503083. Catalyzes the oxidative decarboxylation of 5'-C-glycyluridine (GlyU) to uridine-5'-carboxamide (CarU). Is stereospecific for the (5'S,6'R)-diastereomer of GlyU. Directly incorporates a single oxygen atom from O(2) into the product CarU. The chain is 5'-C-glycyluridine monooxygenase-decarboxylase from Streptomyces sp.